The chain runs to 148 residues: Large ribosomal subunit protein bL9 (148 aa).

It belongs to the bacterial ribosomal protein bL9 family.

Functionally, binds to the 23S rRNA. This is Large ribosomal subunit protein bL9 from Thermus thermophilus (strain ATCC BAA-163 / DSM 7039 / HB27).